The primary structure comprises 155 residues: uncharacterized protein (155 aa).

Positions methionine 1–alanine 23 are cleaved as a signal peptide.

The protein to E.coli YfjT.

This is an uncharacterized protein from Escherichia coli (strain K12).